Here is a 194-residue protein sequence, read N- to C-terminus: Probable transcription factor At4g00130 (194 aa).

This sequence belongs to the GeBP family.

The sequence is that of Probable transcription factor At4g00130 from Arabidopsis thaliana (Mouse-ear cress).